The sequence spans 248 residues: Ubiquinone/menaquinone biosynthesis C-methyltransferase UbiE (248 aa).

S-adenosyl-L-methionine contacts are provided by Ser-68 and Asp-92.

This sequence belongs to the class I-like SAM-binding methyltransferase superfamily. MenG/UbiE family.

The catalysed reaction is a 2-demethylmenaquinol + S-adenosyl-L-methionine = a menaquinol + S-adenosyl-L-homocysteine + H(+). It catalyses the reaction a 2-methoxy-6-(all-trans-polyprenyl)benzene-1,4-diol + S-adenosyl-L-methionine = a 5-methoxy-2-methyl-3-(all-trans-polyprenyl)benzene-1,4-diol + S-adenosyl-L-homocysteine + H(+). It functions in the pathway quinol/quinone metabolism; menaquinone biosynthesis; menaquinol from 1,4-dihydroxy-2-naphthoate: step 2/2. The protein operates within cofactor biosynthesis; ubiquinone biosynthesis. Methyltransferase required for the conversion of demethylmenaquinol (DMKH2) to menaquinol (MKH2) and the conversion of 2-polyprenyl-6-methoxy-1,4-benzoquinol (DDMQH2) to 2-polyprenyl-3-methyl-6-methoxy-1,4-benzoquinol (DMQH2). This chain is Ubiquinone/menaquinone biosynthesis C-methyltransferase UbiE, found in Rickettsia bellii (strain RML369-C).